Consider the following 115-residue polypeptide: Large ribosomal subunit protein bL19 (115 aa).

The protein belongs to the bacterial ribosomal protein bL19 family.

Its function is as follows. This protein is located at the 30S-50S ribosomal subunit interface and may play a role in the structure and function of the aminoacyl-tRNA binding site. This Lachnospira eligens (strain ATCC 27750 / DSM 3376 / VPI C15-48 / C15-B4) (Eubacterium eligens) protein is Large ribosomal subunit protein bL19.